Consider the following 75-residue polypeptide: Putative snRNP Sm-like protein (75 aa).

Positions 4–75 constitute a Sm domain; it reads RPLDVIHRSL…NVLAISPTEE (72 aa).

It belongs to the snRNP Sm proteins family.

This is Putative snRNP Sm-like protein from Pyrococcus horikoshii (strain ATCC 700860 / DSM 12428 / JCM 9974 / NBRC 100139 / OT-3).